A 340-amino-acid polypeptide reads, in one-letter code: MNQRLSALVNGGFLSENEAHQLMHDMMSGSLTDAEVAASLSILAHRGETAEEMTGFVRAMRQKAEPAERSLDVVDTCGTGGDGLSTFNISTAAAIVASAAGAKIAKHGNRSVSSKSGSADVLECLGIHIQSTPEETRRQIQEKNMGFLFAPMYHSSMKQVAAVRKQLGFRTVFNLLGPLCHPMQAKKQIIGVYAKEKAKLMAEALAPLEPEHVLFVCGEDGLDELTITANSYVIELKKGDMTEYTLNPEDFGLAKGYLSDIQVQSPEESAKLIQNILNHQTEGAPLHITALNAGAALYVAGKSESLMAGTLKALETIKNGAAKEQLARLKQKTKEEEIYA.

5-phospho-alpha-D-ribose 1-diphosphate contacts are provided by residues Gly-78, 81 to 82 (GD), Thr-86, 88 to 91 (NIST), 106 to 114 (KHGNRSVSS), and Ser-118. Residue Gly-78 coordinates anthranilate. Ser-90 is a Mg(2+) binding site. Residue Asn-109 coordinates anthranilate. Residue Arg-164 participates in anthranilate binding. The Mg(2+) site is built by Asp-223 and Glu-224.

This sequence belongs to the anthranilate phosphoribosyltransferase family. Homodimer. Requires Mg(2+) as cofactor.

It catalyses the reaction N-(5-phospho-beta-D-ribosyl)anthranilate + diphosphate = 5-phospho-alpha-D-ribose 1-diphosphate + anthranilate. Its pathway is amino-acid biosynthesis; L-tryptophan biosynthesis; L-tryptophan from chorismate: step 2/5. Functionally, catalyzes the transfer of the phosphoribosyl group of 5-phosphorylribose-1-pyrophosphate (PRPP) to anthranilate to yield N-(5'-phosphoribosyl)-anthranilate (PRA). The sequence is that of Anthranilate phosphoribosyltransferase from Bacillus pumilus (strain SAFR-032).